The primary structure comprises 592 residues: E3 ubiquitin-protein ligase RNF180 (592 aa).

Over 1–564 the chain is Cytoplasmic; sequence MKRSEESTST…DSRGWWFDMD (564 aa). Ser231 bears the Phosphoserine mark. Positions 282 to 489 are interaction with ZIC2; the sequence is QSPPSFDPNM…VFLQTELNNA (208 aa). The segment at 432 to 474 adopts an RING-type zinc-finger fold; sequence CAVCLDVYFNPYMCYPCHHIFCEPCLRTLAKDNPASTPCPLCR. The helical transmembrane segment at 565–585 threads the bilayer; that stretch reads MVIIYIYSVNWVIGFVVFCFL. The Extracellular segment spans residues 586 to 592; it reads CYFFFPF.

Interacts with ZIC2. As to expression, brain, kidney, testis and uterus. membrane protein. Nucleus envelope.

It is found in the endoplasmic reticulum membrane. Its subcellular location is the nucleus envelope. It carries out the reaction S-ubiquitinyl-[E2 ubiquitin-conjugating enzyme]-L-cysteine + [acceptor protein]-L-lysine = [E2 ubiquitin-conjugating enzyme]-L-cysteine + N(6)-ubiquitinyl-[acceptor protein]-L-lysine.. Its pathway is protein modification; protein ubiquitination. Its function is as follows. E3 ubiquitin-protein ligase which promotes polyubiquitination and degradation by the proteasome pathway of ZIC2. The polypeptide is E3 ubiquitin-protein ligase RNF180 (Rnf180) (Mus musculus (Mouse)).